A 377-amino-acid polypeptide reads, in one-letter code: Probable transposase for insertion sequence element IS5377 (377 aa).

The protein belongs to the transposase 11 family.

This is Probable transposase for insertion sequence element IS5377 from Geobacillus stearothermophilus (Bacillus stearothermophilus).